The chain runs to 278 residues: Dermonecrotic toxin LhSicTox-alphaIV1ii (278 aa).

Histidine 5 is an active-site residue. Mg(2+) is bound by residues glutamate 25 and aspartate 27. The active-site Nucleophile is the histidine 41. 2 cysteine pairs are disulfide-bonded: cysteine 45–cysteine 51 and cysteine 47–cysteine 192. Aspartate 85 lines the Mg(2+) pocket.

It belongs to the arthropod phospholipase D family. Class II subfamily. Requires Mg(2+) as cofactor. In terms of tissue distribution, expressed by the venom gland.

The protein resides in the secreted. It carries out the reaction an N-(acyl)-sphingosylphosphocholine = an N-(acyl)-sphingosyl-1,3-cyclic phosphate + choline. The catalysed reaction is an N-(acyl)-sphingosylphosphoethanolamine = an N-(acyl)-sphingosyl-1,3-cyclic phosphate + ethanolamine. The enzyme catalyses a 1-acyl-sn-glycero-3-phosphocholine = a 1-acyl-sn-glycero-2,3-cyclic phosphate + choline. It catalyses the reaction a 1-acyl-sn-glycero-3-phosphoethanolamine = a 1-acyl-sn-glycero-2,3-cyclic phosphate + ethanolamine. In terms of biological role, dermonecrotic toxins cleave the phosphodiester linkage between the phosphate and headgroup of certain phospholipids (sphingolipid and lysolipid substrates), forming an alcohol (often choline) and a cyclic phosphate. This toxin acts on sphingomyelin (SM). It may also act on ceramide phosphoethanolamine (CPE), lysophosphatidylcholine (LPC) and lysophosphatidylethanolamine (LPE), but not on lysophosphatidylserine (LPS), and lysophosphatidylglycerol (LPG). It acts by transphosphatidylation, releasing exclusively cyclic phosphate products as second products. Induces dermonecrosis, hemolysis, increased vascular permeability, edema, inflammatory response, and platelet aggregation. This is Dermonecrotic toxin LhSicTox-alphaIV1ii from Loxosceles hirsuta (Recluse spider).